A 116-amino-acid chain; its full sequence is Large ribosomal subunit protein bL17 (116 aa).

The protein belongs to the bacterial ribosomal protein bL17 family. Part of the 50S ribosomal subunit. Contacts protein L32.

The chain is Large ribosomal subunit protein bL17 from Prochlorococcus marinus (strain NATL2A).